An 849-amino-acid polypeptide reads, in one-letter code: Protein translocase subunit SecA (849 aa).

ATP is bound by residues Q85, 103 to 107 (GEGKT), and D493. Zn(2+) contacts are provided by C832, C834, C843, and H844.

It belongs to the SecA family. In terms of assembly, monomer and homodimer. Part of the essential Sec protein translocation apparatus which comprises SecA, SecYEG and auxiliary proteins SecDF. Other proteins may also be involved. Zn(2+) is required as a cofactor.

The protein resides in the cell membrane. Its subcellular location is the cytoplasm. It carries out the reaction ATP + H2O + cellular proteinSide 1 = ADP + phosphate + cellular proteinSide 2.. In terms of biological role, part of the Sec protein translocase complex. Interacts with the SecYEG preprotein conducting channel. Has a central role in coupling the hydrolysis of ATP to the transfer of proteins into and across the cell membrane, serving as an ATP-driven molecular motor driving the stepwise translocation of polypeptide chains across the membrane. This is Protein translocase subunit SecA from Streptococcus thermophilus (strain CNRZ 1066).